The sequence spans 153 residues: uncharacterized protein (153 aa).

A disordered region spans residues 1–88; that stretch reads MDKDRPGLPA…VPPPQLDHPG (88 aa).

This is an uncharacterized protein from Epstein-Barr virus (strain P3HR-1) (HHV-4).